Reading from the N-terminus, the 305-residue chain is Outer membrane protein assembly factor BamD (305 aa).

Positions 1–24 (MLRIFQGRPAVTIAAVLVAASVAG) are cleaved as a signal peptide. Cys25 carries the N-palmitoyl cysteine lipid modification. Residue Cys25 is the site of S-diacylglycerol cysteine attachment. TPR repeat units follow at residues 41 to 74 (VELL…HPYS), 78 to 111 (RRSI…YPGN), 113 to 136 (SAQY…NRDQ), and 174 to 207 (AGKE…HQTT).

The protein belongs to the BamD family. In terms of assembly, part of the Bam complex.

Its subcellular location is the cell outer membrane. Functionally, part of the outer membrane protein assembly complex, which is involved in assembly and insertion of beta-barrel proteins into the outer membrane. The polypeptide is Outer membrane protein assembly factor BamD (Caulobacter vibrioides (strain ATCC 19089 / CIP 103742 / CB 15) (Caulobacter crescentus)).